The chain runs to 298 residues: TLR adapter interacting with SLC15A4 on the lysosome (298 aa).

The pLxIS motif motif lies at Ser287–Ser291. Ser291 is subject to Phosphoserine.

Interacts (via pLxIS motif) with IRF5; leading to IRF5 activation. Interacts with SLC15A4; leading to its recruitment to endolysosome. Post-translationally, the phosphorylated pLxIS motif constitutes an IRF5-binding motif, leading to recruitment of the transcription factor IRF5 to induce type-I interferons and other cytokines.

Its subcellular location is the lysosome membrane. The protein resides in the endosome membrane. The protein localises to the nucleus. It is found in the cytoplasm. In terms of biological role, innate immune adapter that mediates the recruitment and activation of IRF5 downstream of endolysosomal toll-like receptors TLR7, TLR8 and TLR9. Following recruitment to endolysosome by SLC15A4 downstream of TLR7, TLR8 and TLR9, specifically recruits IRF5 transcription factor via its pLxIS motif, leading to IRF5 activation and subsequent expression of type I interferons. Plays a role in the regulation of endolysosomal pH in immune cells such as B-cells, dendritic cells and monocytes. The sequence is that of TLR adapter interacting with SLC15A4 on the lysosome from Mus musculus (Mouse).